Consider the following 444-residue polypeptide: tRNA modification GTPase MnmE (444 aa).

Residues Arg-23, Glu-82, and Lys-121 each coordinate (6S)-5-formyl-5,6,7,8-tetrahydrofolate. The 150-residue stretch at 216 to 365 (GTSIVLAGLP…LKQALQKWLN (150 aa)) folds into the TrmE-type G domain. Asn-226 serves as a coordination point for K(+). GTP-binding positions include 226-231 (NAGKSS), 245-251 (TDIPGTT), and 270-273 (DSAG). Ser-230 contacts Mg(2+). 3 residues coordinate K(+): Thr-245, Ile-247, and Thr-250. Thr-251 contributes to the Mg(2+) binding site. Lys-444 lines the (6S)-5-formyl-5,6,7,8-tetrahydrofolate pocket.

The protein belongs to the TRAFAC class TrmE-Era-EngA-EngB-Septin-like GTPase superfamily. TrmE GTPase family. In terms of assembly, homodimer. Heterotetramer of two MnmE and two MnmG subunits. K(+) is required as a cofactor.

It localises to the cytoplasm. Exhibits a very high intrinsic GTPase hydrolysis rate. Involved in the addition of a carboxymethylaminomethyl (cmnm) group at the wobble position (U34) of certain tRNAs, forming tRNA-cmnm(5)s(2)U34. This Chlamydia trachomatis serovar A (strain ATCC VR-571B / DSM 19440 / HAR-13) protein is tRNA modification GTPase MnmE.